The chain runs to 228 residues: uncharacterized protein (228 aa).

The next 5 helical transmembrane spans lie at His-14–Ala-34, Val-42–Leu-62, Phe-130–Ser-150, Phe-156–Met-176, and Ile-192–Leu-212.

This sequence belongs to the AzlC family.

The protein resides in the cell membrane. This is an uncharacterized protein from Helicobacter pylori (strain J99 / ATCC 700824) (Campylobacter pylori J99).